The sequence spans 513 residues: ATP synthase subunit alpha (513 aa).

169 to 176 is a binding site for ATP; the sequence is GDRQTGKT.

It belongs to the ATPase alpha/beta chains family. As to quaternary structure, F-type ATPases have 2 components, CF(1) - the catalytic core - and CF(0) - the membrane proton channel. CF(1) has five subunits: alpha(3), beta(3), gamma(1), delta(1), epsilon(1). CF(0) has three main subunits: a(1), b(2) and c(9-12). The alpha and beta chains form an alternating ring which encloses part of the gamma chain. CF(1) is attached to CF(0) by a central stalk formed by the gamma and epsilon chains, while a peripheral stalk is formed by the delta and b chains.

It localises to the cell inner membrane. The enzyme catalyses ATP + H2O + 4 H(+)(in) = ADP + phosphate + 5 H(+)(out). Its function is as follows. Produces ATP from ADP in the presence of a proton gradient across the membrane. The alpha chain is a regulatory subunit. This is ATP synthase subunit alpha from Cupriavidus metallidurans (strain ATCC 43123 / DSM 2839 / NBRC 102507 / CH34) (Ralstonia metallidurans).